The following is a 921-amino-acid chain: Ribosome-releasing factor 2, mitochondrial (921 aa).

A mitochondrion-targeting transit peptide spans 1–55 (MVSALLLRARQNGRAARCLDYPKVKCWALASLPKSSLEKPGFSQVRRFSVFHPQS). One can recognise a tr-type G domain in the interval 60–368 (DLTRNIGIIA…SVVDLLPSPQ (309 aa)). Residues 69–76 (AHIDAGKT), 152–156 (DTPGH), and 206–209 (NKMD) contribute to the GTP site.

This sequence belongs to the TRAFAC class translation factor GTPase superfamily. Classic translation factor GTPase family. EF-G/EF-2 subfamily.

The protein resides in the mitochondrion. Mitochondrial GTPase that mediates the disassembly of ribosomes from messenger RNA at the termination of mitochondrial protein biosynthesis. Not involved in the GTP-dependent ribosomal translocation step during translation elongation. The polypeptide is Ribosome-releasing factor 2, mitochondrial (mef2) (Emericella nidulans (strain FGSC A4 / ATCC 38163 / CBS 112.46 / NRRL 194 / M139) (Aspergillus nidulans)).